The following is a 183-amino-acid chain: Small ribosomal subunit protein uS4c (183 aa).

One can recognise an S4 RNA-binding domain in the interval 82-143; the sequence is MRLDNILFRL…KQRSKALIQN (62 aa).

This sequence belongs to the universal ribosomal protein uS4 family. As to quaternary structure, part of the 30S ribosomal subunit. Contacts protein S5. The interaction surface between S4 and S5 is involved in control of translational fidelity.

The protein localises to the plastid. The protein resides in the chloroplast. In terms of biological role, one of the primary rRNA binding proteins, it binds directly to 16S rRNA where it nucleates assembly of the body of the 30S subunit. Functionally, with S5 and S12 plays an important role in translational accuracy. The polypeptide is Small ribosomal subunit protein uS4c (rps4) (Crocosmia sp. (strain Porto Alegre 034)).